Here is a 623-residue protein sequence, read N- to C-terminus: NAD-dependent malic enzyme, mitochondrial (623 aa).

The transit peptide at Met1–Phe31 directs the protein to the mitochondrion. 2 residues coordinate fumarate: Arg88 and Arg122. Ser143 (proton donor) is an active-site residue. Residue Arg196 participates in (S)-malate binding. Arg196 lines the NAD(+) pocket. Catalysis depends on Lys214, which acts as the Proton acceptor. A divalent metal cation contacts are provided by Glu285 and Asp286. Asn289 contacts NAD(+). Residue Asp309 participates in a divalent metal cation binding. Ala345 contributes to the NAD(+) binding site. Residues Asn464 and Asn509 each coordinate (S)-malate.

The protein belongs to the malic enzymes family. Heterodimer of two related subunits. Mg(2+) serves as cofactor. It depends on Mn(2+) as a cofactor.

It is found in the mitochondrion matrix. The catalysed reaction is (S)-malate + NAD(+) = pyruvate + CO2 + NADH. Its pathway is photosynthesis; C4 acid pathway. The chain is NAD-dependent malic enzyme, mitochondrial from Amaranthus hypochondriacus (Prince-of-Wales feather).